The following is a 122-amino-acid chain: Large ribosomal subunit protein uL14 (122 aa).

Belongs to the universal ribosomal protein uL14 family. Part of the 50S ribosomal subunit. Forms a cluster with proteins L3 and L19. In the 70S ribosome, L14 and L19 interact and together make contacts with the 16S rRNA in bridges B5 and B8.

Functionally, binds to 23S rRNA. Forms part of two intersubunit bridges in the 70S ribosome. The polypeptide is Large ribosomal subunit protein uL14 (Cupriavidus taiwanensis (strain DSM 17343 / BCRC 17206 / CCUG 44338 / CIP 107171 / LMG 19424 / R1) (Ralstonia taiwanensis (strain LMG 19424))).